A 221-amino-acid polypeptide reads, in one-letter code: GTP cyclohydrolase-2 (221 aa).

63 to 67 provides a ligand contact to GTP; it reads RLHSE. Positions 68, 79, and 81 each coordinate Zn(2+). Residues Gln-84, 107–109, and Thr-129 each bind GTP; that span reads EGR. The Proton acceptor role is filled by Asp-141. Residue Arg-143 is the Nucleophile of the active site. GTP-binding residues include Ser-164 and Lys-169.

This sequence belongs to the GTP cyclohydrolase II family. The cofactor is Zn(2+).

The catalysed reaction is GTP + 4 H2O = 2,5-diamino-6-hydroxy-4-(5-phosphoribosylamino)-pyrimidine + formate + 2 phosphate + 3 H(+). The protein operates within cofactor biosynthesis; riboflavin biosynthesis; 5-amino-6-(D-ribitylamino)uracil from GTP: step 1/4. Functionally, catalyzes the conversion of GTP to 2,5-diamino-6-ribosylamino-4(3H)-pyrimidinone 5'-phosphate (DARP), formate and pyrophosphate. The polypeptide is GTP cyclohydrolase-2 (Streptomyces coelicolor (strain ATCC BAA-471 / A3(2) / M145)).